A 406-amino-acid polypeptide reads, in one-letter code: Cholinephosphotransferase 1 (406 aa).

The residue at position 2 (alanine 2) is an N-acetylalanine. At 2–62 (AAGAGAGSAP…LLQWIPLWMA (61 aa)) the chain is on the cytoplasmic side. Residues 63-83 (PNSITLLGLAVNVVTTLVLIS) form a helical membrane-spanning segment. Asparagine 64 is a binding site for CDP-choline. Over 84–93 (YCPTATEEAP) the chain is Lumenal. Residues 94 to 118 (YWTYLLCALGLFIYQSLDAIDGKQA) form a helical membrane-spanning segment. 2 residues coordinate Mg(2+): aspartate 111 and aspartate 114. Arginine 119 provides a ligand contact to CDP-choline. Topologically, residues 119–125 (RRTNSCS) are cytoplasmic. The helical transmembrane segment at 126 to 150 (PLGELFDHGCDSLSTVFMAVGASIA) threads the bilayer. Mg(2+) is bound at residue aspartate 132. Residue histidine 133 is the Proton acceptor of the active site. Residue aspartate 136 coordinates Mg(2+). Residues 151–160 (ARLGTYPDWF) are Lumenal-facing. The chain crosses the membrane as a helical span at residues 161–179 (FFCSFIGMFVFYCAHWQTY). At 180–190 (VSGMLRFGKVD) the chain is on the cytoplasmic side. The chain crosses the membrane as a helical span at residues 191-207 (VTEIQIALVIVFVLSAF). Residues 208–222 (GGATMWDYTIPILEI) are Lumenal-facing. Residues 223-248 (KLKILPVLGFLGGVIFSCSNYFHVIL) form a helical membrane-spanning segment. The Cytoplasmic portion of the chain corresponds to 249–265 (HGGVGKNGSTIAGTSVL). Residues 266 to 281 (SPGLHIGLIIILAIMI) form a helical membrane-spanning segment. At 282–293 (YKKSATDVFEKH) the chain is on the lumenal side. Residues 294 to 316 (PCLYILMFGCVFAKVSQKLVVAH) traverse the membrane as a helical segment. Residues 317-329 (MTKSELYLQDTVF) lie on the Cytoplasmic side of the membrane. Residues 330–339 (LGPGLLFLDQ) form a helical membrane-spanning segment. The Lumenal segment spans residues 340-346 (YFNNFID). Residues 347–376 (EYVVLWMAMVISSFDMVIYFSALCLQISRH) form a helical membrane-spanning segment. The Cytoplasmic portion of the chain corresponds to 377-406 (LHLNIFKTACHQAPEQVQVLSSKSHQNNMD).

It belongs to the CDP-alcohol phosphatidyltransferase class-I family. The cofactor is Mg(2+). Requires Mn(2+) as cofactor. As to expression, highly expressed in testis, colon, small intestine, heart, prostate and spleen. Also detected in kidney, skeletal muscle, pancreas, leukocytes, ovary and thymus. Weakly expressed in the brain, placenta and lung. Overexpressed in cancerous breast epithelial cell lines.

It localises to the golgi apparatus membrane. The catalysed reaction is CDP-choline + a 1,2-diacyl-sn-glycerol = a 1,2-diacyl-sn-glycero-3-phosphocholine + CMP + H(+). It catalyses the reaction 1-octadecanoyl-2-(5Z,8Z,11Z,14Z-eicosatetraenoyl)-sn-glycerol + CDP-choline = 1-octadecanoyl-2-(5Z,8Z,11Z,14Z-eicosatetraenoyl)-sn-glycero-3-phosphocholine + CMP + H(+). The enzyme catalyses 1-hexadecanoyl-2-(9Z-octadecenoyl)-sn-glycerol + CDP-choline = 1-hexadecanoyl-2-(9Z-octadecenoyl)-sn-glycero-3-phosphocholine + CMP + H(+). It carries out the reaction 1-hexadecanoyl-2-(4Z,7Z,10Z,13Z,16Z,19Z-docosahexaenoyl)-sn-glycerol + CDP-choline = 1-hexadecanoyl-2-(4Z,7Z,10Z,13Z,16Z,19Z-docosahexaenoyl)-sn-glycero-3-phosphocholine + CMP + H(+). The catalysed reaction is 1,2-dioctanoyl-sn-glycerol + CDP-choline = 1,2-dioctanoyl-sn-glycero-3-phosphocholine + CMP + H(+). It participates in phospholipid metabolism; phosphatidylcholine biosynthesis; phosphatidylcholine from phosphocholine: step 2/2. Functionally, catalyzes the final step of de novo phosphatidylcholine (PC) synthesis, i.e. the transfer of choline phosphate from CDP-choline to the free hydroxyl of a diacylglycerol (DAG), producing a PC. It thereby plays a central role in the formation and maintenance of vesicular membranes. The polypeptide is Cholinephosphotransferase 1 (Homo sapiens (Human)).